The following is a 212-amino-acid chain: Ribonuclease HII (212 aa).

Positions 1 to 206 (MILVGIDEAG…LQDIAPNYYI (206 aa)) constitute an RNase H type-2 domain. Residues Asp7, Glu8, and Asp104 each contribute to the a divalent metal cation site.

The protein belongs to the RNase HII family. Mn(2+) serves as cofactor. The cofactor is Mg(2+).

The protein resides in the cytoplasm. The catalysed reaction is Endonucleolytic cleavage to 5'-phosphomonoester.. Functionally, endonuclease that specifically degrades the RNA of RNA-DNA hybrids. This chain is Ribonuclease HII, found in Sulfolobus acidocaldarius (strain ATCC 33909 / DSM 639 / JCM 8929 / NBRC 15157 / NCIMB 11770).